We begin with the raw amino-acid sequence, 245 residues long: 1-(5-phosphoribosyl)-5-[(5-phosphoribosylamino)methylideneamino] imidazole-4-carboxamide isomerase (245 aa).

Asp-11 (proton acceptor) is an active-site residue. Catalysis depends on Asp-132, which acts as the Proton donor.

It belongs to the HisA/HisF family.

It localises to the cytoplasm. It catalyses the reaction 1-(5-phospho-beta-D-ribosyl)-5-[(5-phospho-beta-D-ribosylamino)methylideneamino]imidazole-4-carboxamide = 5-[(5-phospho-1-deoxy-D-ribulos-1-ylimino)methylamino]-1-(5-phospho-beta-D-ribosyl)imidazole-4-carboxamide. It functions in the pathway amino-acid biosynthesis; L-histidine biosynthesis; L-histidine from 5-phospho-alpha-D-ribose 1-diphosphate: step 4/9. The polypeptide is 1-(5-phosphoribosyl)-5-[(5-phosphoribosylamino)methylideneamino] imidazole-4-carboxamide isomerase (Bacillus pumilus (strain SAFR-032)).